The chain runs to 746 residues: Steroid receptor seven-up, isoform A (746 aa).

The tract at residues 38 to 191 (PPHSAWHEPP…HSQSSNSGSQ (154 aa)) is disordered. A compositionally biased stretch (low complexity) spans 56 to 68 (AASAGPGTTTGSV). Residues 83–101 (QQSAVIKQDLSCPSLNQAG) show a composition bias toward polar residues. A compositionally biased stretch (gly residues) spans 122-141 (GSAGGHHSGSGSGSGSGVNP). A compositionally biased stretch (polar residues) spans 158 to 170 (MLTSIKGQPTGCG). A compositionally biased stretch (low complexity) spans 171–191 (STTPSSQANSSHSQSSNSGSQ). The segment at residues 197–272 (NIECVVCGDK…MGMRREAVQR (76 aa)) is a DNA-binding region (nuclear receptor). 2 NR C4-type zinc fingers span residues 200-220 (CVVC…CEGC) and 236-260 (CRGS…LKKC). The NR LBD domain maps to 307-556 (YLSSYISLLL…PLVPSAGSAF (250 aa)). Residues 579–645 (QATPPSSGGG…APAPVPTSSV (67 aa)) form a disordered region. The segment covering 592–605 (GHNNSSGLGASLPT) has biased composition (polar residues). Positions 606 to 645 (QSQSGSSSRNLTASPLSTSLATAPAPASASAPAPVPTSSV) are enriched in low complexity.

The protein belongs to the nuclear hormone receptor family. NR2 subfamily. As to expression, expressed in several embryonic tissues; dorsal vessel, oenocyte and fat body. CNS expression is dynamic and confined to temporally restricted subsections of the NB lineage; expressed in many NB and GMCs, but only a small number of neurons.

The protein resides in the nucleus. Its function is as follows. Receptor that is required in photoreceptors R1, R3, R4 and R6 during eye development; generation of the ganglion mother cell-2 (GMC-2) fate in the nb7-3 lineage, coinciding with the transition in the expression of HB to KR in the neuroblasts (NBs). This is Steroid receptor seven-up, isoform A (svp) from Drosophila melanogaster (Fruit fly).